The sequence spans 469 residues: MVLDDLGSSLRGTLDDLRGKSRLSEEDIEDIVKEIQRSLLQADVDVGLVQDLSNSIETRALDEEPPAGTTPRDWVLRIVYEELVDLVGESTELPLEEQTIMLAGLYGSGKTTTAAKMAWWFSTKGLRPAIIQTDTDRPGAYDQSKEMAERAEVDFYGDPDEDDPVKIARDGLEATENADVRIVDTAGRDGLNEELIEQIERIEQEVQPDRDLLVLDAAMGQSAKSQAADFEAAIGIDGVVITKLDGTAKGGGALAAVNETDSTIAFLGSGETVKDIERFEPSGFISRLLGMGDLKQLTERVERAMEETQEGDEEDWDPEDMLEGQFTLKDMRKQMQTMNNMGPLDQVMDMIPGLGGGLMDQLPDDAMDVTQERMQDFDVIMDSMTEEELENPRVVGQSRTKRICRGSGKPEERVRELLQQHKQMEQMLKQFQGMGDGDMERMMKQMQQGGGGGGGMGGMGGGGMGPFGD.

Residues 104 to 111 (GLYGSGKT), 184 to 188 (DTAGR), and 242 to 245 (TKLD) contribute to the GTP site. Disordered regions lie at residues 388-410 (ELEN…SGKP) and 447-469 (QQGG…PFGD). Residues 448 to 469 (QGGGGGGGMGGMGGGGMGPFGD) show a composition bias toward gly residues.

This sequence belongs to the GTP-binding SRP family. SRP54 subfamily. Part of the signal recognition particle protein translocation system, which is composed of SRP and FtsY. Archaeal SRP consists of a 7S RNA molecule of 300 nucleotides and two protein subunits: SRP54 and SRP19.

The protein localises to the cytoplasm. It catalyses the reaction GTP + H2O = GDP + phosphate + H(+). Its function is as follows. Involved in targeting and insertion of nascent membrane proteins into the cytoplasmic membrane. Binds to the hydrophobic signal sequence of the ribosome-nascent chain (RNC) as it emerges from the ribosomes. The SRP-RNC complex is then targeted to the cytoplasmic membrane where it interacts with the SRP receptor FtsY. This chain is Signal recognition particle 54 kDa protein, found in Haloarcula marismortui (strain ATCC 43049 / DSM 3752 / JCM 8966 / VKM B-1809) (Halobacterium marismortui).